The sequence spans 296 residues: Nucleotide-binding protein Pnuc_1915 (296 aa).

8-15 (GISGSGKS) contributes to the ATP binding site. GTP is bound at residue 57–60 (DARR).

The protein belongs to the RapZ-like family.

In terms of biological role, displays ATPase and GTPase activities. This chain is Nucleotide-binding protein Pnuc_1915, found in Polynucleobacter asymbioticus (strain DSM 18221 / CIP 109841 / QLW-P1DMWA-1) (Polynucleobacter necessarius subsp. asymbioticus).